Reading from the N-terminus, the 382-residue chain is Succinyl-diaminopimelate desuccinylase (382 aa).

Residue His73 coordinates Zn(2+). The active site involves Asp75. Asp106 is a binding site for Zn(2+). Residue Glu140 is the Proton acceptor of the active site. Zn(2+) is bound by residues Glu141, Glu169, and His355.

It belongs to the peptidase M20A family. DapE subfamily. In terms of assembly, homodimer. Requires Zn(2+) as cofactor. The cofactor is Co(2+).

The enzyme catalyses N-succinyl-(2S,6S)-2,6-diaminopimelate + H2O = (2S,6S)-2,6-diaminopimelate + succinate. It functions in the pathway amino-acid biosynthesis; L-lysine biosynthesis via DAP pathway; LL-2,6-diaminopimelate from (S)-tetrahydrodipicolinate (succinylase route): step 3/3. Functionally, catalyzes the hydrolysis of N-succinyl-L,L-diaminopimelic acid (SDAP), forming succinate and LL-2,6-diaminopimelate (DAP), an intermediate involved in the bacterial biosynthesis of lysine and meso-diaminopimelic acid, an essential component of bacterial cell walls. The polypeptide is Succinyl-diaminopimelate desuccinylase (Saccharophagus degradans (strain 2-40 / ATCC 43961 / DSM 17024)).